The following is a 777-amino-acid chain: Kelch domain-containing protein 7A (777 aa).

A helical membrane pass occupies residues 21-38; sequence VVLSAAALLLVTVAYRLY. Residues 43 to 207 are disordered; it reads APAQRWGGNG…GLGQLEPPHC (165 aa). Serine 86 bears the Phosphoserine mark. The segment covering 113–127 has biased composition (basic and acidic residues); that stretch reads TDRKPQRKGSGEERG. Asparagine 257 carries N-linked (GlcNAc...) asparagine glycosylation. A disordered region spans residues 313–359; sequence LTEVPSPRPPPGSLGTGAASGGQAGDTKGAAERAASPQTGPWPSTRG. The span at 326–336 shows a compositional bias: gly residues; the sequence is LGTGAASGGQA. Kelch repeat units follow at residues 328–374, 492–538, 541–589, 590–632, and 635–677; these read TGAA…ENPE, QYLV…ICSL, YLFV…ALDG, HLYA…ATVR, and EIFV…AVNG. Serine 365 is subject to Phosphoserine.

The protein localises to the membrane. This Homo sapiens (Human) protein is Kelch domain-containing protein 7A (KLHDC7A).